Here is an 848-residue protein sequence, read N- to C-terminus: Protein NETWORKED 2C (848 aa).

Positions 10-90 (YSWWWASHVR…ERYDHISKEL (81 aa)) constitute an NAB domain. The interval 108 to 141 (FAMNEDDDDDAPVSPRHHKNKTSNKNVPKVPDLP) is disordered. Coiled coils occupy residues 172 to 204 (LSKT…SYEN), 241 to 278 (EAQI…SRKQ), 305 to 454 (SEKE…KATN), and 752 to 797 (AKFE…SEEF).

The protein belongs to the NET family.

In terms of biological role, plant-specific actin binding protein. May be part of a membrane-cytoskeletal adapter complex. The chain is Protein NETWORKED 2C from Arabidopsis thaliana (Mouse-ear cress).